Here is a 195-residue protein sequence, read N- to C-terminus: Probable GTP-binding protein EngB (195 aa).

An EngB-type G domain is found at aspartate 24–leucine 195. GTP-binding positions include glycine 32–serine 39, glycine 59–leucine 63, aspartate 77–glycine 80, threonine 144–aspartate 147, and phenylalanine 176–serine 178. Residues serine 39 and threonine 61 each contribute to the Mg(2+) site.

It belongs to the TRAFAC class TrmE-Era-EngA-EngB-Septin-like GTPase superfamily. EngB GTPase family. Requires Mg(2+) as cofactor.

Necessary for normal cell division and for the maintenance of normal septation. This Lactococcus lactis subsp. lactis (strain IL1403) (Streptococcus lactis) protein is Probable GTP-binding protein EngB.